The following is a 1101-amino-acid chain: Carbamoyl phosphate synthase large chain (1101 aa).

The tract at residues 1-402 (MPKRTDLKSV…ALQKALRSLE (402 aa)) is carboxyphosphate synthetic domain. ATP contacts are provided by Arg129, Arg169, Gly175, Gly176, Glu208, Ile210, Glu215, Gly241, Val242, His243, Gln285, and Glu299. The ATP-grasp 1 domain maps to 133 to 328 (KGVVERAGGE…IAKIATKLAL (196 aa)). Residues Gln285, Glu299, and Asn301 each contribute to the Mg(2+) site. The Mn(2+) site is built by Gln285, Glu299, and Asn301. The segment at 403–544 (QKGSELAFPQ…YRYSSYDLET (142 aa)) is oligomerization domain. The carbamoyl phosphate synthetic domain stretch occupies residues 545 to 947 (EVAPHEGESV…AFAKSQSAAG (403 aa)). Residues 675 to 866 (ALVLERAGLV…LAKAAARIGV (192 aa)) enclose the ATP-grasp 2 domain. Positions 711, 750, 752, 757, 782, 783, 784, 785, 825, and 837 each coordinate ATP. Mg(2+)-binding residues include Gln825, Glu837, and Asn839. Residues Gln825, Glu837, and Asn839 each coordinate Mn(2+). Residues 948 to 1093 (GPLPTSGRVF…QEHDARLQQA (146 aa)) enclose the MGS-like domain. The tract at residues 948–1101 (GPLPTSGRVF…QAVAGPEAAA (154 aa)) is allosteric domain.

Belongs to the CarB family. In terms of assembly, composed of two chains; the small (or glutamine) chain promotes the hydrolysis of glutamine to ammonia, which is used by the large (or ammonia) chain to synthesize carbamoyl phosphate. Tetramer of heterodimers (alpha,beta)4. Mg(2+) serves as cofactor. It depends on Mn(2+) as a cofactor.

The enzyme catalyses hydrogencarbonate + L-glutamine + 2 ATP + H2O = carbamoyl phosphate + L-glutamate + 2 ADP + phosphate + 2 H(+). It carries out the reaction hydrogencarbonate + NH4(+) + 2 ATP = carbamoyl phosphate + 2 ADP + phosphate + 2 H(+). It participates in amino-acid biosynthesis; L-arginine biosynthesis; carbamoyl phosphate from bicarbonate: step 1/1. The protein operates within pyrimidine metabolism; UMP biosynthesis via de novo pathway; (S)-dihydroorotate from bicarbonate: step 1/3. Functionally, large subunit of the glutamine-dependent carbamoyl phosphate synthetase (CPSase). CPSase catalyzes the formation of carbamoyl phosphate from the ammonia moiety of glutamine, carbonate, and phosphate donated by ATP, constituting the first step of 2 biosynthetic pathways, one leading to arginine and/or urea and the other to pyrimidine nucleotides. The large subunit (synthetase) binds the substrates ammonia (free or transferred from glutamine from the small subunit), hydrogencarbonate and ATP and carries out an ATP-coupled ligase reaction, activating hydrogencarbonate by forming carboxy phosphate which reacts with ammonia to form carbamoyl phosphate. This Micrococcus luteus (strain ATCC 4698 / DSM 20030 / JCM 1464 / CCM 169 / CCUG 5858 / IAM 1056 / NBRC 3333 / NCIMB 9278 / NCTC 2665 / VKM Ac-2230) (Micrococcus lysodeikticus) protein is Carbamoyl phosphate synthase large chain.